Here is a 96-residue protein sequence, read N- to C-terminus: Co-chaperonin GroES (96 aa).

The tract at residues 26–48 (LLPGSAQEKPSQGEVLATGNGQI) is disordered.

The protein belongs to the GroES chaperonin family. Heptamer of 7 subunits arranged in a ring. Interacts with the chaperonin GroEL.

It localises to the cytoplasm. Functionally, together with the chaperonin GroEL, plays an essential role in assisting protein folding. The GroEL-GroES system forms a nano-cage that allows encapsulation of the non-native substrate proteins and provides a physical environment optimized to promote and accelerate protein folding. GroES binds to the apical surface of the GroEL ring, thereby capping the opening of the GroEL channel. This Psychrobacter arcticus (strain DSM 17307 / VKM B-2377 / 273-4) protein is Co-chaperonin GroES.